A 557-amino-acid chain; its full sequence is Carboxypeptidase Y homolog A (557 aa).

Positions 1 to 17 (MRVLPAAMLVGAATAAV) are cleaved as a signal peptide. The propeptide occupies 18 to 138 (PPFQQVLGGN…KLEAYDLRVK (121 aa)). Disulfide bonds link Cys193-Cys433, Cys327-Cys341, Cys351-Cys374, Cys358-Cys367, and Cys396-Cys403. A glycan (N-linked (GlcNAc...) asparagine) is linked at Asn224. The active site involves Ser280. The active site involves Asp472. Asn523 carries an N-linked (GlcNAc...) asparagine glycan. His534 is a catalytic residue.

The protein belongs to the peptidase S10 family.

It localises to the vacuole. The catalysed reaction is Release of a C-terminal amino acid with broad specificity.. Vacuolar carboxypeptidase involved in degradation of small peptides. Digests preferentially peptides containing an aliphatic or hydrophobic residue in P1' position, as well as methionine, leucine or phenylalanine in P1 position of ester substrate. This chain is Carboxypeptidase Y homolog A (cpyA), found in Aspergillus niger (strain ATCC MYA-4892 / CBS 513.88 / FGSC A1513).